We begin with the raw amino-acid sequence, 3414 residues long: Genome polyprotein (3414 aa).

Residues 1-30 (MVKKAILKGKGGGPPRRVSKETATKTRQPR) are disordered. Residues 1–98 (MVKKAILKGK…LQKRGKRRSA (98 aa)) are Cytoplasmic-facing. Residues 97-117 (SATDWMSWLLVITLLGMTIAA) constitute a propeptide, ER anchor for the capsid protein C, removed in mature form by serine protease NS3. The helical transmembrane segment at 99 to 119 (TDWMSWLLVITLLGMTIAATV) threads the bilayer. The Extracellular portion of the chain corresponds to 120 to 242 (RKERDGSTVI…HLTRVEGWVW (123 aa)). N-linked (GlcNAc...) asparagine; by host glycosylation occurs at Asn144. The chain crosses the membrane as a helical span at residues 243 to 260 (KNRLLALAMVTVVWLTLE). Residue Ser261 is a topological domain, cytoplasmic. The helical transmembrane segment at 262–280 (VVTRVAVLVVLLCLAPVYA) threads the bilayer. Residues 281-727 (SRCTHLENRD…HTVLGGAFNS (447 aa)) lie on the Extracellular side of the membrane. Intrachain disulfides connect Cys283–Cys310, Cys340–Cys396, Cys340–Cys401, Cys354–Cys385, Cys372–Cys396, and Cys372–Cys401. The interval 378-391 (DRGWGNHCGLFGKG) is fusion peptide. N-linked (GlcNAc...) asparagine; by host glycosylation is present at Asn434. Disulfide bonds link Cys466–Cys570 and Cys587–Cys618. A helical membrane pass occupies residues 728–748 (IFGGVGFLPKLLLGVALAWLG). Residues 749 to 755 (LNMRNPT) are Extracellular-facing. A helical membrane pass occupies residues 756 to 776 (MSMSFLLAGVLVLAMTLGVGA). Topologically, residues 777 to 1132 (DVGCAVDTER…RSMVVADNGE (356 aa)) are extracellular. Disulfide bonds link Cys780/Cys791, Cys831/Cys920, Cys955/Cys1000, Cys1057/Cys1106, Cys1068/Cys1090, and Cys1089/Cys1093. Residues Asn861, Asn983, and Asn999 are each glycosylated (N-linked (GlcNAc...) asparagine; by host). Residues 1133-1153 (LLSEGGVPGIVALFVVLEYII) form a helical membrane-spanning segment. The Cytoplasmic segment spans residues 1154–1158 (RRRPS). The chain crosses the membrane as a helical span at residues 1159–1179 (TGSTVVWGGIVVLALLVTGMV). Residues 1180–1187 (RMESLVRY) lie on the Lumenal side of the membrane. A helical transmembrane segment spans residues 1188–1208 (VVAVGITFHLELGPEIVALML). The Cytoplasmic portion of the chain corresponds to 1209-1293 (LQAVFELRVG…LLMALMTQQD (85 aa)). Residues 1294–1314 (VVTVHHGLVCFLSAASACSIW) form a helical membrane-spanning segment. The Lumenal portion of the chain corresponds to 1315–1327 (RLLRGHREQKGLT). A helical membrane pass occupies residues 1328–1348 (WIVPLARLLGGEGSGIRLLAF). Residues 1349-1359 (WELSAHRGRRS) are Cytoplasmic-facing. Residues 1360–1377 (FSEPLTVVGVMLTLASGM) traverse the membrane as a helical segment. The Lumenal segment spans residues 1378–1382 (MRHTS). A helical transmembrane segment spans residues 1383 to 1403 (QEALCALAVASFLLLMLVLGT). Residues 1404–1454 (RKMQLVAEWSGCVEWHPELVNEGGEVSLRVRQDAMGNFHLTELEKEERMMA) are Cytoplasmic-facing. The interacts with and activates NS3 protease stretch occupies residues 1410-1449 (AEWSGCVEWHPELVNEGGEVSLRVRQDAMGNFHLTELEKE). An intramembrane region (helical) is located at residues 1455-1475 (FWLIAGLAASAIHWSGIIGVM). Over 1476–2160 (GLWTLTKMLR…RMAERDAPEA (685 aa)) the chain is Cytoplasmic. One can recognise a Peptidase S7 domain in the interval 1490 to 1669 (SDLVFSGQGG…EAEKSRPNLP (180 aa)). Residues His1543, Asp1567, and Ser1627 each act as charge relay system; for serine protease NS3 activity in the active site. In terms of domain architecture, Helicase ATP-binding spans 1675 to 1831 (TGWTSKGQIT…ESNGAITSEE (157 aa)). 1688–1695 (MHPGSGKT) lines the ATP pocket. Positions 1779–1782 (DEAH) match the DEAH box motif. Positions 1841 to 2000 (DGFDWITEYE…TLRGPVATFY (160 aa)) constitute a Helicase C-terminal domain. Lys1883 bears the N6-acetyllysine; by host mark. The helical transmembrane segment at 2161–2181 (FLTMVEMMVLGLATLGVIWCF) threads the bilayer. The Lumenal portion of the chain corresponds to 2182-2189 (VVRTSISR). The helical intramembrane region spans 2190-2210 (MMLGTLVLLASLLLLWAGGVG). Position 2211 (Tyr2211) is a topological domain, lumenal. The helical transmembrane segment at 2212 to 2232 (GNMAGVALIFYTLLTVLQPEA) threads the bilayer. Topologically, residues 2233 to 2244 (GKQRSSDDNKLA) are cytoplasmic. Residues 2245–2265 (YFLLTLCSLAGLVAANEMGFL) traverse the membrane as a helical segment. Residues 2266-2299 (EKTKADLSTVLWSEREEPRPWSEWTNVDIQPARS) are Lumenal-facing. The segment at residues 2300–2320 (WGTYVLVVSLFTPYIIHQLQT) is an intramembrane region (helical). The Lumenal portion of the chain corresponds to 2321 to 2343 (KIQQLVNSAVASGAQAMRDLGGG). Positions 2344 to 2364 (APFFGVAGHVMTLGVVSLIGA) form an intramembrane region, helical. At 2365 to 2368 (TPTS) the chain is on the lumenal side. Residues 2369 to 2389 (LMVGVGLAALHLAIVVSGLEA) traverse the membrane as a helical segment. Topologically, residues 2390-2432 (ELTQRAHKVFFSAMVRNPMVDGDVINPFGEGEAKPALYERRMS) are cytoplasmic. The chain crosses the membrane as a helical span at residues 2433 to 2453 (LVLAIVLCLMSVVMNRTVASI). Over 2454–2477 (TEASAVGLAAAGQLLRPEADTLWT) the chain is Lumenal. The chain crosses the membrane as a helical span at residues 2478 to 2498 (MPVACGMSGVVRGSLWGFLPL). The Cytoplasmic portion of the chain corresponds to 2499-3414 (GHRLWLRASG…WELRLESSII (916 aa)). The region spanning 2512–2776 (GGSEGDTLGD…ELDLGVGTRC (265 aa)) is the mRNA cap 0-1 NS5-type MT domain. Position 2567 (Ser2567) interacts with S-adenosyl-L-methionine. Ser2567 carries the post-translational modification Phosphoserine. Catalysis depends on Lys2572, which acts as the For 2'-O-MTase activity. S-adenosyl-L-methionine contacts are provided by Gly2597, Trp2598, Thr2615, Ile2616, Asp2642, and Val2643. Asp2657 acts as the For 2'-O-MTase activity in catalysis. Residue Ile2658 participates in S-adenosyl-L-methionine binding. Catalysis depends on for 2'-O-MTase activity residues Lys2694 and Glu2730. The interaction with host SCRIB stretch occupies residues 2730 to 2734 (EMYYS). Tyr2732 contributes to the S-adenosyl-L-methionine binding site. The Zn(2+) site is built by Glu2950, His2954, Cys2959, and Cys2962. Residues 3040–3189 (GLFYADDTAG…RPLDDRFGKA (150 aa)) enclose the RdRp catalytic domain. Zn(2+) is bound by residues His3224, Cys3240, and Cys3359.

This sequence in the N-terminal section; belongs to the class I-like SAM-binding methyltransferase superfamily. mRNA cap 0-1 NS5-type methyltransferase family. As to quaternary structure, homodimer. Interacts (via N-terminus) with host EXOC1 (via C-terminus); this interaction results in EXOC1 degradation through the proteasome degradation pathway. Forms heterodimers with envelope protein E in the endoplasmic reticulum and Golgi. In terms of assembly, homodimer; in the endoplasmic reticulum and Golgi. Interacts with protein prM. Interacts with non-structural protein 1. As to quaternary structure, homodimer; Homohexamer when secreted. Interacts with envelope protein E. Interacts (via N-terminus) with serine protease NS3. In terms of assembly, forms a heterodimer with serine protease NS3. May form homooligomers. As to quaternary structure, forms a heterodimer with NS2B. Interacts with NS4B. Interacts with unphosphorylated RNA-directed RNA polymerase NS5; this interaction stimulates RNA-directed RNA polymerase NS5 guanylyltransferase activity. Interacts with serine protease NS3. In terms of assembly, homodimer. Interacts with host STAT2; this interaction inhibits the phosphorylation of the latter, and, when all viral proteins are present (polyprotein), targets STAT2 for degradation. Interacts with serine protease NS3. Interacts with host SCRIB; this interaction targets NS5 to the cell membrane periphery and nucleus, thereby allowing efficient host nuclear STAT1 inhibition. In terms of processing, specific enzymatic cleavages in vivo yield mature proteins. Cleavages in the lumen of endoplasmic reticulum are performed by host signal peptidase, whereas cleavages in the cytoplasmic side are performed by serine protease NS3. Signal cleavage at the 2K-4B site requires a prior NS3 protease-mediated cleavage at the 4A-2K site. Post-translationally, cleaved in post-Golgi vesicles by a host furin, releasing the mature small envelope protein M, and peptide pr. This cleavage is incomplete as up to 30% of viral particles still carry uncleaved prM. N-glycosylated. In terms of processing, N-glycosylated. The excreted form is glycosylated and this is required for efficient secretion of the protein from infected cells. Post-translationally, acetylated by host KAT5. Acetylation modulates NS3 RNA-binding and unwinding activities and plays an important positive role for viral replication. Phosphorylated on serines residues. This phosphorylation may trigger NS5 nuclear localization.

It localises to the virion. Its subcellular location is the host nucleus. It is found in the host cytoplasm. The protein localises to the host perinuclear region. The protein resides in the secreted. It localises to the virion membrane. Its subcellular location is the host endoplasmic reticulum membrane. It carries out the reaction Selective hydrolysis of -Xaa-Xaa-|-Yaa- bonds in which each of the Xaa can be either Arg or Lys and Yaa can be either Ser or Ala.. The catalysed reaction is RNA(n) + a ribonucleoside 5'-triphosphate = RNA(n+1) + diphosphate. It catalyses the reaction a ribonucleoside 5'-triphosphate + H2O = a ribonucleoside 5'-diphosphate + phosphate + H(+). The enzyme catalyses ATP + H2O = ADP + phosphate + H(+). It carries out the reaction a 5'-end (5'-triphosphoguanosine)-ribonucleoside in mRNA + S-adenosyl-L-methionine = a 5'-end (N(7)-methyl 5'-triphosphoguanosine)-ribonucleoside in mRNA + S-adenosyl-L-homocysteine. The catalysed reaction is a 5'-end (N(7)-methyl 5'-triphosphoguanosine)-ribonucleoside in mRNA + S-adenosyl-L-methionine = a 5'-end (N(7)-methyl 5'-triphosphoguanosine)-(2'-O-methyl-ribonucleoside) in mRNA + S-adenosyl-L-homocysteine + H(+). Functionally, plays a role in virus budding by binding to the cell membrane and gathering the viral RNA into a nucleocapsid that forms the core of a mature virus particle. During virus entry, may induce genome penetration into the host cytoplasm after hemifusion induced by the surface proteins. Can migrate to the cell nucleus where it modulates host functions. Its function is as follows. Inhibits RNA silencing by interfering with host Dicer. Prevents premature fusion activity of envelope proteins in trans-Golgi by binding to envelope protein E at pH6.0. After virion release in extracellular space, gets dissociated from E dimers. In terms of biological role, acts as a chaperone for envelope protein E during intracellular virion assembly by masking and inactivating envelope protein E fusion peptide. prM is the only viral peptide matured by host furin in the trans-Golgi network probably to avoid catastrophic activation of the viral fusion activity in acidic Golgi compartment prior to virion release. prM-E cleavage is inefficient, and many virions are only partially matured. These uncleaved prM would play a role in immune evasion. Functionally, may play a role in virus budding. Exerts cytotoxic effects by activating a mitochondrial apoptotic pathway through M ectodomain. May display a viroporin activity. Its function is as follows. Binds to host cell surface receptor and mediates fusion between viral and cellular membranes. Envelope protein is synthesized in the endoplasmic reticulum in the form of heterodimer with protein prM. They play a role in virion budding in the ER, and the newly formed immature particle is covered with 60 spikes composed of heterodimer between precursor prM and envelope protein E. The virion is transported to the Golgi apparatus where the low pH causes dissociation of PrM-E heterodimers and formation of E homodimers. prM-E cleavage is inefficient, and many virions are only partially matured. These uncleaved prM would play a role in immune evasion. Involved in immune evasion, pathogenesis and viral replication. Once cleaved off the polyprotein, is targeted to three destinations: the viral replication cycle, the plasma membrane and the extracellular compartment. Essential for viral replication. Required for formation of the replication complex and recruitment of other non-structural proteins to the ER-derived membrane structures. Excreted as a hexameric lipoparticle that plays a role against host immune response. Antagonizing the complement function. Binds to the host macrophages and dendritic cells. Inhibits signal transduction originating from Toll-like receptor 3 (TLR3). In terms of biological role, component of the viral RNA replication complex that functions in virion assembly and antagonizes the host immune response. Functionally, required cofactor for the serine protease function of NS3. May have membrane-destabilizing activity and form viroporins. Its function is as follows. Displays three enzymatic activities: serine protease, NTPase and RNA helicase. NS3 serine protease, in association with NS2B, performs its autocleavage and cleaves the polyprotein at dibasic sites in the cytoplasm: C-prM, NS2A-NS2B, NS2B-NS3, NS3-NS4A, NS4A-2K and NS4B-NS5. NS3 RNA helicase binds RNA and unwinds dsRNA in the 3' to 5' direction. Regulates the ATPase activity of the NS3 helicase activity. NS4A allows NS3 helicase to conserve energy during unwinding. In terms of biological role, functions as a signal peptide for NS4B and is required for the interferon antagonism activity of the latter. Functionally, induces the formation of ER-derived membrane vesicles where the viral replication takes place. Inhibits interferon (IFN)-induced host STAT1 phosphorylation and nuclear translocation, thereby preventing the establishment of cellular antiviral state by blocking the IFN-alpha/beta pathway. Inhibits STAT2 translocation in the nucleus after IFN-alpha treatment. Its function is as follows. Replicates the viral (+) and (-) genome, and performs the capping of genomes in the cytoplasm. NS5 methylates viral RNA cap at guanine N-7 and ribose 2'-O positions. Besides its role in genome replication, also prevents the establishment of cellular antiviral state by blocking the interferon-alpha/beta (IFN-alpha/beta) signaling pathway. Inhibits host TYK2 and STAT2 phosphorylation, thereby preventing activation of JAK-STAT signaling pathway. This chain is Genome polyprotein, found in Tick-borne encephalitis virus (strain Hypr) (TBEV).